Consider the following 267-residue polypeptide: Apolipoprotein A-I (267 aa).

Residues 1-18 (MKAAVLTLAVLFLTGSQA) form the signal peptide. Tandem repeats lie at residues 68 to 89 (LKLL…EQLG) and 90 to 111 (PVTQ…QEMS). The 10 X approximate tandem repeats stretch occupies residues 68–267 (LKLLDNWDSV…EEYTKKLNTQ (200 aa)). M110 carries the methionine sulfoxide modification. A 3; half-length repeat occupies 112–122 (KDLEEVKAKVQ). 5 tandem repeats follow at residues 123-144 (PYLD…QKVE), 145-166 (PLRA…EKLS), 167-188 (PLGE…THLA), 189-210 (PYSD…ENGG), and 211-232 (ARLA…EKAK). M136 is modified (methionine sulfoxide). The 9; half-length repeat unit spans residues 233–243 (PALEDLRQGLL). Repeat 10 spans residues 244 to 267 (PVLESFKVSFLSALEEYTKKLNTQ).

Belongs to the apolipoprotein A1/A4/E family. As to quaternary structure, homodimer. Interacts with APOA1BP and CLU. Component of a sperm activating protein complex (SPAP), consisting of APOA1, an immunoglobulin heavy chain, an immunoglobulin light chain and albumin. Interacts with NDRG1. Interacts with SCGB3A2. Interacts with NAXE and YJEFN3. In terms of processing, glycosylated. Post-translationally, palmitoylated. Phosphorylation sites are present in the extracellular medium. In terms of tissue distribution, major protein of plasma HDL, also found in chylomicrons.

It localises to the secreted. Its function is as follows. Participates in the reverse transport of cholesterol from tissues to the liver for excretion by promoting cholesterol efflux from tissues and by acting as a cofactor for the lecithin cholesterol acyltransferase (LCAT). As part of the SPAP complex, activates spermatozoa motility. This Pan paniscus (Pygmy chimpanzee) protein is Apolipoprotein A-I (APOA1).